The chain runs to 473 residues: Benzoyl-CoA oxygenase component B (473 aa).

Belongs to the benzoyl-CoA oxygenase component B family. Monomer. The subunit composition of the active BoxA/BoxB protein complex is not known. Fe cation is required as a cofactor.

The enzyme catalyses benzoyl-CoA + NADPH + O2 + H(+) = 2,3-epoxy-2,3-dihydrobenzoyl-CoA + NADP(+) + H2O. In terms of biological role, the BoxA/BoxB complex catalyzes the aerobic reduction/oxygenation of the aromatic ring of benzoyl-CoA to form 2,3-epoxy-2,3-dihydrobenzoyl-CoA. BoxB acts as the benzoyl-CoA oxygenase, after being reduced by the reductase component BoxA. BoxAB does not act on NADH or benzoate. The polypeptide is Benzoyl-CoA oxygenase component B (boxB) (Aromatoleum evansii (Azoarcus evansii)).